The chain runs to 948 residues: UvrABC system protein A (948 aa).

Residue 31 to 38 participates in ATP binding; it reads GLSGSGKS. Residues 249–277 form a C4-type zinc finger; sequence CPNGHDIGFTELSPRMFSFNSPYGACETC. ABC transporter domains lie at 307 to 586 and 606 to 934; these read WAGS…KNSL and GNGS…QYLK. 638–645 is an ATP binding site; sequence GVSGSGKS. Residues 737 to 763 form a C4-type zinc finger; the sequence is CETCEGDGILKIEMHFLPDVYVTCEVC.

It belongs to the ABC transporter superfamily. UvrA family. In terms of assembly, forms a heterotetramer with UvrB during the search for lesions.

The protein localises to the cytoplasm. Its function is as follows. The UvrABC repair system catalyzes the recognition and processing of DNA lesions. UvrA is an ATPase and a DNA-binding protein. A damage recognition complex composed of 2 UvrA and 2 UvrB subunits scans DNA for abnormalities. When the presence of a lesion has been verified by UvrB, the UvrA molecules dissociate. The chain is UvrABC system protein A from Leptospira interrogans serogroup Icterohaemorrhagiae serovar copenhageni (strain Fiocruz L1-130).